Here is an 836-residue protein sequence, read N- to C-terminus: Protein translocase subunit SecA (836 aa).

ATP contacts are provided by residues Gln85, 103–107, and Asp492; that span reads GEGKT. Residues 786–817 form a disordered region; the sequence is REQVAKETSTNQGGDDTLKKQPIKKEPKIGRN. The segment covering 801–816 has biased composition (basic and acidic residues); that stretch reads DTLKKQPIKKEPKIGR. 4 residues coordinate Zn(2+): Cys820, Cys822, Cys831, and Cys832.

The protein belongs to the SecA family. As to quaternary structure, monomer and homodimer. Part of the essential Sec protein translocation apparatus which comprises SecA, SecYEG and auxiliary proteins SecDF. Other proteins may also be involved. Zn(2+) serves as cofactor.

Its subcellular location is the cell membrane. It is found in the cytoplasm. It carries out the reaction ATP + H2O + cellular proteinSide 1 = ADP + phosphate + cellular proteinSide 2.. Its function is as follows. Part of the Sec protein translocase complex. Interacts with the SecYEG preprotein conducting channel. Has a central role in coupling the hydrolysis of ATP to the transfer of proteins into and across the cell membrane, serving as an ATP-driven molecular motor driving the stepwise translocation of polypeptide chains across the membrane. This chain is Protein translocase subunit SecA, found in Clostridium tetani (strain Massachusetts / E88).